We begin with the raw amino-acid sequence, 371 residues long: tRNA-specific 2-thiouridylase MnmA 2 (371 aa).

Residues 13-20 and Met-39 each bind ATP; that span reads GMSGGVDS. Positions 99 to 101 are interaction with target base in tRNA; the sequence is NPD. Cys-104 acts as the Nucleophile in catalysis. A disulfide bridge links Cys-104 with Cys-200. Residue Gly-128 coordinates ATP. Positions 150-152 are interaction with tRNA; it reads KDQ. Cys-200 acts as the Cysteine persulfide intermediate in catalysis. The tract at residues 308 to 309 is interaction with tRNA; that stretch reads RY.

It belongs to the MnmA/TRMU family.

It localises to the cytoplasm. It carries out the reaction S-sulfanyl-L-cysteinyl-[protein] + uridine(34) in tRNA + AH2 + ATP = 2-thiouridine(34) in tRNA + L-cysteinyl-[protein] + A + AMP + diphosphate + H(+). Catalyzes the 2-thiolation of uridine at the wobble position (U34) of tRNA, leading to the formation of s(2)U34. This chain is tRNA-specific 2-thiouridylase MnmA 2, found in Geobacillus kaustophilus (strain HTA426).